Consider the following 233-residue polypeptide: Short chain dehydrogenase trt9 (233 aa).

The NADP(+) site is built by Asp33, Arg95, Tyr127, Lys131, and Val160. Tyr127 functions as the Proton donor in the catalytic mechanism. The active-site Lowers pKa of active site Tyr is Lys131.

Belongs to the short-chain dehydrogenases/reductases (SDR) family.

It functions in the pathway secondary metabolite biosynthesis; terpenoid biosynthesis. In terms of biological role, short chain dehydrogenase; part of the gene cluster that mediates the biosynthesis of terretonin, a fungal meroterpenoid that acts as a mycotoxin. The first step of the pathway is the synthesis of 3,5-dimethylorsellinic acid (DMOA) by the polyketide synthase trt4. DMOA is then prenylated into farnesyl-DMOA by the polyprenyl transferase trt2. Methylation by the methyltransferase trt5 then leads to farnesyl-DMOA methyl ester which is further subject to epoxidation by the FAD-dependent monooxygenase trt8 to yield epoxyfarnesyl-DMOA methyl ester. Cyclization of epoxyfarnesyl-DMOA methyl ester by the terpene cyclase trt1 leads to a tetracycle intermediate which is in turn converted to preterretonin. Dehydrogenase trt9 comes next to transform preterretonin to preterrenoid. The FAD-dependent monooxygenase trt3 is then required for the C-hydroxylation at C16 of preterrenoid to yield terrenoid. The cytochrome P450 trt6 catalyzes three successive oxidations to transform terrenoid into an unstable intermediate, which then undergoes the D-ring expansion and unusual rearrangement of the methoxy group to afford the core skeleton of terretonin. Trt14 catalyzes the D-ring expansion of terretonin involving intramolecular methoxy rearrangement as well as the hydrolysis of the expanded D-ring and the methyl ester moiety. Finally, the nonheme iron-dependent dioxygenase trt7 accomplishes the last two oxidation reactions steps to complete the biosynthesis of terretonin. Terretonin C is produced via spontaneous decarboxylation of the terretonin precursor. Another shunt product of the terretonin biosynthesis is dihydrofarnesyl-DMOA, derived from epoxyfarnesyl-DMOA through hydrolysis of the epoxide. This is Short chain dehydrogenase trt9 from Aspergillus terreus (strain NIH 2624 / FGSC A1156).